The following is a 140-amino-acid chain: UPF0225 protein SAV_6631 (140 aa).

Residues Met-1–Cys-22 form a disordered region. Positions Thr-10 to Pro-19 are enriched in low complexity.

Belongs to the UPF0225 family.

In Streptomyces avermitilis (strain ATCC 31267 / DSM 46492 / JCM 5070 / NBRC 14893 / NCIMB 12804 / NRRL 8165 / MA-4680), this protein is UPF0225 protein SAV_6631.